We begin with the raw amino-acid sequence, 183 residues long: DELTA-miturgitoxin-Cp1b (183 aa).

The first 20 residues, 1-20 (MKFSLFFSVFFLAVLHACLS), serve as a signal peptide directing secretion. A propeptide spanning residues 21–47 (ESEIDLEDEEHFMSSDSFLSEIQDESR) is cleaved from the precursor. A Processing quadruplet motif motif is present at residues 44–47 (DESR). 8 cysteine pairs are disulfide-bonded: Cys-51–Cys-66, Cys-58–Cys-75, Cys-65–Cys-88, Cys-77–Cys-86, Cys-115–Cys-130, Cys-122–Cys-139, Cys-129–Cys-157, and Cys-141–Cys-155. The predicted alpha-helix stretch occupies residues 164–177 (QAIEGALRIAKKLI). A Tryptophan amide modification is found at Trp-181.

This sequence belongs to the neurotoxin 19 (CSTX) family. Double-CSTX subfamily. Post-translationally, cleavage of the propeptide depends on the processing quadruplet motif (XXXR, with at least one of X being E). Expressed by the venom gland.

Its subcellular location is the secreted. It localises to the target cell membrane. Its function is as follows. Spider venom toxin that exhibits cytolytic activity by forming an alpha-helix across the membrane. Lethal to insect larvae. Causes instant paralysis and death in the larvae of the flesh fly (S.carnaria) at doses of 20 ug/g, at doses of less than 10 ug/g causes reversible paralysis. Has cytolytic activity against insect Sf9 cells. Causes stable and irreversible depolarization of fly muscle fibers, leading to contracture at higher toxin concentrations. Destabilizes membranes. This chain is DELTA-miturgitoxin-Cp1b, found in Cheiracanthium punctorium (Yellow sac spider).